The chain runs to 337 residues: Diacylglycerol acyltransferase/mycolyltransferase Ag85A (337 aa).

The N-terminal stretch at 1 to 42 (MKLVDRFRGAATGTSRRLMVGAVGAALLSGLVGFVGGSATAS) is a signal peptide. Residue 85 to 86 (MR) coordinates substrate. The tract at residues 101 to 111 (FEWYYQSGISV) is fibronectin-binding. Cysteine 130 and cysteine 135 form a disulfide bridge. Serine 169 and aspartate 197 together coordinate substrate. The active-site Nucleophile is the serine 169. Glutamate 273 is an active-site residue. Residues 275–278 (FVRT), lysine 282, and 305–307 (HSW) each bind substrate. Histidine 305 is an active-site residue.

Belongs to the mycobacterial A85 antigen family. Homodimer.

The protein localises to the secreted. The protein resides in the cell wall. It is found in the cytoplasm. It carries out the reaction an acyl-CoA + a 1,2-diacyl-sn-glycerol = a triacyl-sn-glycerol + CoA. It catalyses the reaction 2 alpha,alpha'-trehalose 6-mycolate = alpha,alpha'-trehalose 6,6'-bismycolate + alpha,alpha-trehalose. In terms of biological role, the antigen 85 proteins (FbpA, FbpB, FbpC) are responsible for the high affinity of mycobacteria for fibronectin, a large adhesive glycoprotein, which facilitates the attachment of M.tuberculosis to murine alveolar macrophages (AMs). They also help to maintain the integrity of the cell wall by catalyzing the transfer of mycolic acids to cell wall arabinogalactan, and through the synthesis of alpha,alpha-trehalose dimycolate (TDM, cord factor). They catalyze the transfer of a mycoloyl residue from one molecule of alpha,alpha-trehalose monomycolate (TMM) to another TMM, leading to the formation of TDM. FbpA mediates triacylglycerol (TAG) formation with long-chain acyl-CoA as the acyl donor and 1,2-dipalmitoyl-sn-glycerol (1,2-dipalmitin) as the acyl acceptor. It has a preference for C26:0-CoA over C18:1-CoA. This chain is Diacylglycerol acyltransferase/mycolyltransferase Ag85A (fbpA), found in Mycobacterium ulcerans.